Here is a 915-residue protein sequence, read N- to C-terminus: Scaffold attachment factor B1 (915 aa).

The segment covering 1-24 has biased composition (low complexity); the sequence is MAETLSGLGDSGAAGAAALSSASS. The disordered stretch occupies residues 1-33; it reads MAETLSGLGDSGAAGAAALSSASSETGTRRLSD. At Ala-2 the chain carries N-acetylalanine. Phosphoserine is present on residues Ser-24 and Ser-55. An SAP domain is found at 31 to 65; it reads LSDLRVIDLRAELRKRNVDSSGNKSVLMERLKKAI. A disordered region spans residues 64–118; that stretch reads AIEDEGGNPDEIEITSEGNKKTSKRSSKGRKPEEEGVEDNGLEENSGDGQEDVET. Positions 67-77 are enriched in acidic residues; it reads DEGGNPDEIEI. Ser-79 is subject to Phosphoserine. Positions 98–118 are enriched in acidic residues; sequence EGVEDNGLEENSGDGQEDVET. Residues Lys-172 and Lys-186 each participate in a glycyl lysine isopeptide (Lys-Gly) (interchain with G-Cter in SUMO2) cross-link. At Thr-188 the chain carries Phosphothreonine. Phosphoserine occurs at positions 195, 197, and 209. A disordered region spans residues 221–407; it reads LGETCKSEPV…EKGRSSCGRN (187 aa). The segment covering 225-234 has biased composition (basic and acidic residues); the sequence is CKSEPVKEES. Lys-231 is covalently cross-linked (Glycyl lysine isopeptide (Lys-Gly) (interchain with G-Cter in SUMO)). The segment covering 275 to 286 has biased composition (polar residues); it reads SESTAHAQSSKA. The segment covering 293 to 309 has biased composition (basic and acidic residues); the sequence is VKREPAEQPGDGERTDC. Lys-294 participates in a covalent cross-link: Glycyl lysine isopeptide (Lys-Gly) (interchain with G-Cter in SUMO). Residues 319 to 330 show a composition bias toward low complexity; that stretch reads EQSSAASELAEA. The segment covering 346-359 has biased composition (basic and acidic residues); that stretch reads EARDSKEDGRKFDF. Residues 371-383 show a composition bias toward polar residues; that stretch reads ESSTSEGADQKMS. Residue Lys-381 forms a Glycyl lysine isopeptide (Lys-Gly) (interchain with G-Cter in SUMO2) linkage. Phosphoserine occurs at positions 383 and 384. The segment covering 390 to 401 has biased composition (basic and acidic residues); that stretch reads DTKRLSKEEKGR. Lys-392 is covalently cross-linked (Glycyl lysine isopeptide (Lys-Gly) (interchain with G-Cter in SUMO2)). Residues 406–484 form the RRM domain; that stretch reads RNFWVSGLSS…KMISVEKAKN (79 aa). Ser-415 bears the Phosphoserine mark. Composition is skewed to basic and acidic residues over residues 477 to 551 and 559 to 570; these read ISVE…ERSR and GTERTVVMDKSK. 3 disordered regions span residues 477–641, 671–708, and 749–915; these read ISVE…EREE, RERMHVEHERRREQERIHREREELRRQQELRYEQERRP, and FDHR…TRRY. Residues Lys-483, Lys-514, Lys-543, and Lys-570 each participate in a glycyl lysine isopeptide (Lys-Gly) (interchain with G-Cter in SUMO2) cross-link. Residues 528 to 792 are interaction with POLR2A. Interaction with SFRS1; SFRS9 and SFRS10; sequence GDDGSGEKSK…RHGGPERHGR (265 aa). Lys-578 is covalently cross-linked (Glycyl lysine isopeptide (Lys-Gly) (interchain with G-Cter in SUMO1); alternate). Residue Lys-578 forms a Glycyl lysine isopeptide (Lys-Gly) (interchain with G-Cter in SUMO2); alternate linkage. Phosphoserine occurs at positions 580, 582, 601, and 604. The segment covering 581-641 has biased composition (basic and acidic residues); it reads GSKERASKSQ…RMQAQWEREE (61 aa). The Nuclear localization signal motif lies at 599 to 616; that stretch reads KRSVVSFDKVKEPRKSRD. Positions 599–915 are interaction with SAFB2; it reads KRSVVSFDKV…PSDARFTRRY (317 aa). At Lys-607 the chain carries N6-acetyllysine. Residues 749–796 are compositionally biased toward basic and acidic residues; the sequence is FDHRDRGRYPDHSVDRREGSRSMMGEREGQHYPERHGGPERHGRDSRD. Arg-811 carries the post-translational modification Omega-N-methylarginine. 2 stretches are compositionally biased toward basic and acidic residues: residues 817-832 and 841-851; these read PRRDWGDHGRREDDRS and MMDRDHKRWQG. A Glycyl lysine isopeptide (Lys-Gly) (interchain with G-Cter in SUMO2) cross-link involves residue Lys-847. Asymmetric dimethylarginine occurs at positions 868, 874, and 884. Positions 892–901 are enriched in gly residues; the sequence is GMQGGFGGQS. Over residues 905 to 915 the composition is skewed to basic and acidic residues; that stretch reads RPSDARFTRRY.

As to quaternary structure, monomer and homodimer. Forms heterodimers with SAFB2. Interacts with KHDRBS3. Interacts with CLK2. Interacts with POLR2A, SRSF1/ASF, SRSF9/SRp30c and SFSF10/TRA2B. Interacts with isoform 1 and isoform 2 of SRPK1 and inhibits its activity. Interacts with RBMX. Interacts with FUS. Interacts with ZBED4. Post-translationally, sumoylated by PIAS1 with SUMO1 and SUMO2/3, desumoylated by SENP1. Sumoylation is required for transcriptional repressor activity. In terms of tissue distribution, ubiquitous. Expressed at high levels in the CNS and at low levels in the liver. Expressed in a wide number of breast cancer cell lines.

The protein resides in the nucleus. In terms of biological role, binds to scaffold/matrix attachment region (S/MAR) DNA and forms a molecular assembly point to allow the formation of a 'transcriptosomal' complex (consisting of SR proteins and RNA polymerase II) coupling transcription and RNA processing. Functions as an estrogen receptor corepressor and can also bind to the HSP27 promoter and decrease its transcription. Thereby acts as a negative regulator of cell proliferation. When associated with RBMX, binds to and stimulates transcription from the SREBF1 promoter. This is Scaffold attachment factor B1 (SAFB) from Homo sapiens (Human).